A 259-amino-acid chain; its full sequence is Putative electron transfer flavoprotein subunit YgcR (259 aa).

It belongs to the ETF beta-subunit/FixA family. As to quaternary structure, ygcQ and YgcR form a heterodimer.

May play a role in a redox process. In Escherichia coli (strain K12), this protein is Putative electron transfer flavoprotein subunit YgcR (ygcR).